Here is a 486-residue protein sequence, read N- to C-terminus: Na(+)/H(+) antiporter NhaA 2 (486 aa).

11 consecutive transmembrane segments (helical) span residues Gly58–Gly78, Leu102–Leu122, Ala138–Leu158, Ala168–Gly188, Val198–Leu218, His220–Ala240, Ile260–Val280, Leu300–Ser320, Val338–Val358, Leu374–Leu394, and Gly404–Leu424. The segment at Gly432–Arg486 is disordered.

It belongs to the NhaA Na(+)/H(+) (TC 2.A.33) antiporter family.

The protein localises to the cell membrane. The catalysed reaction is Na(+)(in) + 2 H(+)(out) = Na(+)(out) + 2 H(+)(in). Functionally, na(+)/H(+) antiporter that extrudes sodium in exchange for external protons. This chain is Na(+)/H(+) antiporter NhaA 2, found in Frankia alni (strain DSM 45986 / CECT 9034 / ACN14a).